A 234-amino-acid polypeptide reads, in one-letter code: Sugar fermentation stimulation protein homolog (234 aa).

The protein belongs to the SfsA family.

This is Sugar fermentation stimulation protein homolog from Shewanella sp. (strain MR-4).